The following is a 119-amino-acid chain: MIHGIGVDLIEIDRIKVLYSKQPKLVERILTKNEQHKFNNFTHEQRKIEFLAGRFATKEAFSKALGTGLGKHVAFNDIDCYNDELGKPKIDYEGFIVHVSISHTEHYAMSQVVLEKSAF.

Positions 8 and 59 each coordinate Mg(2+).

The protein belongs to the P-Pant transferase superfamily. AcpS family. Requires Mg(2+) as cofactor.

Its subcellular location is the cytoplasm. It catalyses the reaction apo-[ACP] + CoA = holo-[ACP] + adenosine 3',5'-bisphosphate + H(+). Transfers the 4'-phosphopantetheine moiety from coenzyme A to a Ser of acyl-carrier-protein. The polypeptide is Holo-[acyl-carrier-protein] synthase (Staphylococcus aureus (strain JH1)).